A 92-amino-acid polypeptide reads, in one-letter code: Putative pterin-4-alpha-carbinolamine dehydratase 2 (92 aa).

This sequence belongs to the pterin-4-alpha-carbinolamine dehydratase family.

The enzyme catalyses (4aS,6R)-4a-hydroxy-L-erythro-5,6,7,8-tetrahydrobiopterin = (6R)-L-erythro-6,7-dihydrobiopterin + H2O. The chain is Putative pterin-4-alpha-carbinolamine dehydratase 2 from Gloeobacter violaceus (strain ATCC 29082 / PCC 7421).